A 425-amino-acid polypeptide reads, in one-letter code: L-lysine N6-monooxygenase (425 aa).

8–14 serves as a coordination point for FAD; sequence IGVGTGP.

It belongs to the lysine N(6)-hydroxylase/L-ornithine N(5)-oxygenase family. The cofactor is FAD.

The protein resides in the cytoplasm. Its subcellular location is the cell membrane. The catalysed reaction is L-lysine + NADPH + O2 = N(6)-hydroxy-L-lysine + NADP(+) + H2O. It functions in the pathway siderophore biosynthesis; aerobactin biosynthesis. Functionally, flavoprotein monooxygenase required for N-hydroxylation of lysine. Involved in the biosynthesis of the siderophore aerobactin which is a chelator that mediates the high-affinity iron transport systems induced by the organism under iron-stressed conditions. This is L-lysine N6-monooxygenase from Escherichia coli.